Here is a 537-residue protein sequence, read N- to C-terminus: Copine-1 (537 aa).

2 C2 domains span residues 1–114 (MAHC…TLPL) and 123–245 (GRGT…ECIH). Residues Asp-21, Asp-27, Asp-80, Asp-82, Asp-92, Asp-153, and Asp-159 each contribute to the Ca(2+) site. Lys-171 is modified (N6-acetyllysine). Ca(2+) contacts are provided by Asp-214, Asp-216, and Asp-222. The VWFA domain maps to 285-505 (NFTVGVDFTG…ALAQTVLAEV (221 aa)).

It belongs to the copine family. In terms of assembly, homodimer; homodimerizes via its C2 domains. Interacts with p65/RELA (via N-terminus); this interaction induces proteolytic cleavage of p65/RELA subunit and inhibition of NF-kappa-B transcriptional activity. Interacts (via VWFA domain) with ACTB, CCDC22, MYCBP2, PPP5C, RDX and UBE2O. Ca(2+) serves as cofactor. Expressed in liver, spleen, muscle, testis, adrenal (at protein level).

The protein localises to the nucleus. Its subcellular location is the cytoplasm. It localises to the cell membrane. Calcium-dependent phospholipid-binding protein that plays a role in calcium-mediated intracellular processes. Involved in the TNF-alpha receptor signaling pathway in a calcium-dependent manner. Exhibits calcium-dependent phospholipid binding properties. Plays a role in neuronal progenitor cell differentiation; induces neurite outgrowth via a AKT-dependent signaling cascade and calcium-independent manner. May recruit target proteins to the cell membrane in a calcium-dependent manner. May function in membrane trafficking. Involved in TNF-alpha-induced NF-kappa-B transcriptional repression by inducing endoprotease processing of the transcription factor NF-kappa-B p65/RELA subunit. Also induces endoprotease processing of NF-kappa-B p50/NFKB1, p52/NFKB2, RELB and REL. The protein is Copine-1 of Bos taurus (Bovine).